Here is a 972-residue protein sequence, read N- to C-terminus: Nuclear factor NF-kappa-B p105 subunit (972 aa).

The RHD domain maps to 39–246; it reads ADGPYLQILE…DAIYDSKAPN (208 aa). An S-nitrosocysteine; alternate modification is found at C61. C61 carries the S-(15-deoxy-Delta12,14-prostaglandin J2-9-yl)cysteine; alternate lipid modification. K325 participates in a covalent cross-link: Glycyl lysine isopeptide (Lys-Gly) (interchain with G-Cter in SUMO2). S337 is subject to Phosphoserine; by PKA. A Nuclear localization signal motif is present at residues 360–365; it reads QRKRQK. Residues 372–394 form a GRR region; it reads DSFGGGSGAGAGGGGMFGSGGGG. The segment at 425–473 is disordered; the sequence is KSNAGMKHGTIDTPSKNDSEGCGKNVDREAVNLSGKVTEPTEQDKESSM. Residues K431 and K440 each carry the N6-acetyllysine; by EP300 modification. Residues 435–972 are interaction with CFLAR; sequence IDTPSKNDSE…GQEGPIEGKI (538 aa). The span at 439 to 454 shows a compositional bias: basic and acidic residues; it reads SKNDSEGCGKNVDREA. 6 ANK repeats span residues 539 to 568, 578 to 607, 611 to 640, 647 to 676, 681 to 711, and 715 to 744; these read NGDS…GLIS, LYQT…DLSL, LGNS…AALL, EGLN…DVNA, SGRT…HVDS, and DGTT…DPLV. Residues 647 to 681 form an essential for interaction with HIF1AN region; sequence EGLNAIHIAVMSNSMPCLLLLVAAGADVNAQERKS. The residue at position 675 (N675) is a (3S)-3-hydroxyasparagine; by HIF1AN. Residue S756 is modified to Phosphoserine. One copy of the ANK 7 repeat lies at 768 to 798; the sequence is PGTTPLDMATNWQVFDILNGKPYEPEFTSDD. One can recognise a Death domain in the interval 814 to 889; that stretch reads LQLYKLLEIP…EAIEVIQAAF (76 aa). The interval 894 to 926 is disordered; it reads TAAPSPGKGAPQTLSLPLSSASTRSPVDEVRDD. Residues 905 to 918 show a composition bias toward polar residues; that stretch reads QTLSLPLSSASTRS. A phosphoserine; by GSK3-beta; in vitro mark is found at S908 and S912. S927 is subject to Phosphoserine. 2 positions are modified to phosphoserine; by IKKB: S931 and S936. Residue S941 is modified to Phosphoserine. Phosphothreonine is present on T947.

As to quaternary structure, component of the NF-kappa-B p65-p50 complex. Homodimer; component of the NF-kappa-B p50-p50 complex. Component of the NF-kappa-B p105-p50 complex. Component of the NF-kappa-B p50-c-Rel complex. Component of a complex consisting of the NF-kappa-B p50-p50 homodimer and BCL3. Also interacts with MAP3K8. NF-kappa-B p50 subunit interacts with NCOA3 coactivator, which may coactivate NF-kappa-B dependent expression via its histone acetyltransferase activity. Interacts with TSC22D3; this interaction prevents nuclear translocation and DNA-binding. Interacts with SPAG9 and UNC5CL. NFKB1/p105 interacts with CFLAR; the interaction inhibits p105 processing into p50. NFKB1/p105 forms a ternary complex with MAP3K8 and TNIP2. Interacts with GSK3B; the interaction prevents processing of p105 to p50. NFKB1/p50 interacts with NFKBIE. NFKB1/p50 interacts with NFKBIZ. Nuclear factor NF-kappa-B p50 subunit interacts with NFKBID. Directly interacts with MEN1. Interacts with HIF1AN. Interacts with FEM1A; interaction is direct. In terms of processing, generation of the NF-kappa-B p50 (Nuclear factor NF-kappa-B p50 subunit) transcription factor takes place both cotranslationally and post-translationally via non-mutually exclusive mechanisms. A cotranslational processing allows the production of both p50 and p105 (Nuclear factor NF-kappa-B p105 subunit) from a single NFKB1 mRNA. While translation occurs, the particular unfolded structure after the GRR repeat region acts as a substrate for the proteasome, promoting degradation of the C-terminus. The GRR acts as a proteasomal 'stop signal', protecting the region upstream of the GRR from degradation and promoting generation of p50. It is unclear if limited proteasome degradation during cotranslational processing depends on ubiquitination. NF-kappa-B p50 is also generated post-translationally following ubiquitination by the KPC complex, leading to limited processing by the proteasome downstream of the GRR region, thereby generating p50. Phosphorylation at the C-terminus by IKBKB/IKKB acts as a signal for ubiquitination and promotes either complete degradation or processing to generate the NF-kappa-B p50 (Nuclear factor NF-kappa-B p50 subunit). Phosphorylation at Ser-908 and Ser-912 primes p105 for proteolytic processing in response to TNF-alpha stimulation. Phosphorylation at Ser-927, Ser-931 and Ser-936 are required for BTRC/BTRCP-mediated ubiquitination and proteolysis. Phosphorylation at Ser-931 is also required for ubiquitination by the KPC complex and limited processing to generate NF-kappa-B p50 (Nuclear factor NF-kappa-B p50 subunit). Post-translationally, polyubiquitinated at multiple Lys residues in the C-terminus. Polyubiquitinated by the SCF(FBXW11) and SCF(BTRC) complexes following phosphorylation at Ser-923, Ser-927, Ser-931 and Ser-936, leading to its complete degradation. In contrast, polyubiquitination by the KPC complex following phosphorylation at Ser-931 leads to limited proteosomal processing and generation of the active NF-kappa-B p50 (Nuclear factor NF-kappa-B p50 subunit). In terms of processing, S-nitrosylation of Cys-61 affects DNA binding. The covalent modification of cysteine by 15-deoxy-Delta12,14-prostaglandin-J2 is autocatalytic and reversible. It may occur as an alternative to other cysteine modifications, such as S-nitrosylation and S-palmitoylation.

It localises to the cytoplasm. Its subcellular location is the nucleus. Functionally, NF-kappa-B is a pleiotropic transcription factor present in almost all cell types and is the endpoint of a series of signal transduction events that are initiated by a vast array of stimuli related to many biological processes such as inflammation, immunity, differentiation, cell growth, tumorigenesis and apoptosis. NF-kappa-B is a homo- or heterodimeric complex formed by the Rel-like domain-containing proteins RELA/p65, RELB, NFKB1/p105, NFKB1/p50, REL and NFKB2/p52 and the heterodimeric p65-p50 complex appears to be most abundant one. The dimers bind at kappa-B sites in the DNA of their target genes and the individual dimers have distinct preferences for different kappa-B sites that they can bind with distinguishable affinity and specificity. Different dimer combinations act as transcriptional activators or repressors, respectively. NF-kappa-B is controlled by various mechanisms of post-translational modification and subcellular compartmentalization as well as by interactions with other cofactors or corepressors. NF-kappa-B complexes are held in the cytoplasm in an inactive state complexed with members of the NF-kappa-B inhibitor (I-kappa-B) family. In a conventional activation pathway, I-kappa-B is phosphorylated by I-kappa-B kinases (IKKs) in response to different activators, subsequently degraded thus liberating the active NF-kappa-B complex which translocates to the nucleus. NF-kappa-B heterodimeric p65-p50 and RelB-p50 complexes are transcriptional activators. The NF-kappa-B p50-p50 homodimer is a transcriptional repressor, but can act as a transcriptional activator when associated with BCL3. NFKB1 appears to have dual functions such as cytoplasmic retention of attached NF-kappa-B proteins by p105 and generation of p50 by a cotranslational processing. The proteasome-mediated process ensures the production of both p50 and p105 and preserves their independent function, although processing of NFKB1/p105 also appears to occur post-translationally. p50 binds to the kappa-B consensus sequence 5'-GGRNNYYCC-3', located in the enhancer region of genes involved in immune response and acute phase reactions. In a complex with MAP3K8, NFKB1/p105 represses MAP3K8-induced MAPK signaling; active MAP3K8 is released by proteasome-dependent degradation of NFKB1/p105. In terms of biological role, P105 is the precursor of the active p50 subunit (Nuclear factor NF-kappa-B p50 subunit) of the nuclear factor NF-kappa-B. Acts as a cytoplasmic retention of attached NF-kappa-B proteins by p105. Constitutes the active form, which associates with RELA/p65 to form the NF-kappa-B p65-p50 complex to form a transcription factor. Together with RELA/p65, binds to the kappa-B consensus sequence 5'-GGRNNYYCC-3', located in the enhancer region of genes involved in immune response and acute phase reactions. The protein is Nuclear factor NF-kappa-B p105 subunit (NFKB1) of Canis lupus familiaris (Dog).